A 729-amino-acid polypeptide reads, in one-letter code: Fatty acid oxidation complex subunit alpha (729 aa).

An enoyl-CoA hydratase/isomerase region spans residues 1-189 (MLYKGDTLYL…KIGLVDGVVK (189 aa)). Substrate is bound at residue Asp-296. The segment at 311 to 729 (ETPKQAAVLG…ARPVGDLKTA (419 aa)) is 3-hydroxyacyl-CoA dehydrogenase. NAD(+)-binding positions include Met-324, Asp-343, 400-402 (VVE), Lys-407, and Ser-429. His-450 (for 3-hydroxyacyl-CoA dehydrogenase activity) is an active-site residue. Residue Asn-453 coordinates NAD(+). Substrate is bound by residues Asn-500 and Tyr-660. The interval 708-729 (RHNEPYYPPVEPARPVGDLKTA) is disordered.

This sequence in the N-terminal section; belongs to the enoyl-CoA hydratase/isomerase family. It in the C-terminal section; belongs to the 3-hydroxyacyl-CoA dehydrogenase family. Heterotetramer of two alpha chains (FadB) and two beta chains (FadA).

It carries out the reaction a (3S)-3-hydroxyacyl-CoA + NAD(+) = a 3-oxoacyl-CoA + NADH + H(+). It catalyses the reaction a (3S)-3-hydroxyacyl-CoA = a (2E)-enoyl-CoA + H2O. The catalysed reaction is a 4-saturated-(3S)-3-hydroxyacyl-CoA = a (3E)-enoyl-CoA + H2O. The enzyme catalyses (3S)-3-hydroxybutanoyl-CoA = (3R)-3-hydroxybutanoyl-CoA. It carries out the reaction a (3Z)-enoyl-CoA = a 4-saturated (2E)-enoyl-CoA. It catalyses the reaction a (3E)-enoyl-CoA = a 4-saturated (2E)-enoyl-CoA. The protein operates within lipid metabolism; fatty acid beta-oxidation. Its function is as follows. Involved in the aerobic and anaerobic degradation of long-chain fatty acids via beta-oxidation cycle. Catalyzes the formation of 3-oxoacyl-CoA from enoyl-CoA via L-3-hydroxyacyl-CoA. It can also use D-3-hydroxyacyl-CoA and cis-3-enoyl-CoA as substrate. This Escherichia coli (strain K12 / MC4100 / BW2952) protein is Fatty acid oxidation complex subunit alpha.